The primary structure comprises 130 residues: Small ribosomal subunit protein uS11 (130 aa).

Belongs to the universal ribosomal protein uS11 family. As to quaternary structure, part of the 30S ribosomal subunit. Interacts with proteins S7 and S18. Binds to IF-3.

Its function is as follows. Located on the platform of the 30S subunit, it bridges several disparate RNA helices of the 16S rRNA. Forms part of the Shine-Dalgarno cleft in the 70S ribosome. This chain is Small ribosomal subunit protein uS11, found in Buchnera aphidicola subsp. Cinara cedri (strain Cc).